The sequence spans 143 residues: MGMVSEFKQFAMRGNVIDLAVGVVIGAAFGKIVTALVEKIIMPPIGWAIGNVDFSRLAWVLKPAGVDATGKEIPAVAIGYGDFINTVVQFLIIAFAIFLVVKLINRVTHRKPDAPKGPSEEVLLLREIRDALKNDTLKPPGAL.

Transmembrane regions (helical) follow at residues 16-36 (VIDL…VTAL) and 84-104 (INTV…VKLI).

This sequence belongs to the MscL family. In terms of assembly, homopentamer.

It is found in the cell inner membrane. Functionally, channel that opens in response to stretch forces in the membrane lipid bilayer. May participate in the regulation of osmotic pressure changes within the cell. This is Large-conductance mechanosensitive channel from Xanthomonas axonopodis pv. citri (strain 306).